A 74-amino-acid polypeptide reads, in one-letter code: Fulgimotoxin (74 aa).

Gln1 carries the pyrrolidone carboxylic acid modification. Intrachain disulfides connect Cys10–Cys34, Cys13–Cys21, Cys27–Cys51, Cys55–Cys66, and Cys67–Cys72.

This sequence belongs to the three-finger toxin family. Ancestral subfamily. Boigatoxin sub-subfamily. As to quaternary structure, monomer. The N-terminus is blocked. In terms of processing, contains 5 disulfide bonds. In terms of tissue distribution, expressed by the venom gland.

It is found in the secreted. Reptile-specific three-finger toxin that is lethal at low doses for lizards, but not for mice. Probably acts as a neurotoxin. The sequence is that of Fulgimotoxin from Oxybelis fulgidus (Green vine snake).